The primary structure comprises 81 residues: Large ribosomal subunit protein bL31B (81 aa).

This sequence belongs to the bacterial ribosomal protein bL31 family. Type B subfamily. As to quaternary structure, part of the 50S ribosomal subunit.

This chain is Large ribosomal subunit protein bL31B, found in Borreliella afzelii (strain PKo) (Borrelia afzelii).